A 150-amino-acid polypeptide reads, in one-letter code: MALDQSLVGRSYPPTAPYEVGREKIREFAEAVGDANPAYTDAEAAKALGHPDVIAPPTFVFSITFKAAGQVIEDPQLGLDYSRVVHGDQKFSYARPVRAGDRLTVTSTIEAIKSMAGNDILDIRGEVHDEAGEHVVTAWTKLVARAAEEA.

Positions 8-116 (VGRSYPPTAP…STIEAIKSMA (109 aa)) constitute a MaoC-like domain.

Belongs to the UPF0336 family.

In Streptomyces coelicolor (strain ATCC BAA-471 / A3(2) / M145), this protein is UPF0336 protein SCO4636.